The sequence spans 304 residues: Dihydroorotate dehydrogenase B (NAD(+)), catalytic subunit (304 aa).

FMN contacts are provided by residues S22 and K46 to G47. Residues K46 and N70 to L74 contribute to the substrate site. N100 and N128 together coordinate FMN. N128 contributes to the substrate binding site. C131 acts as the Nucleophile in catalysis. Residues K166 and I192 each contribute to the FMN site. N193–T194 is a substrate binding site. FMN-binding positions include G218, G244 to G245, and G266 to T267.

The protein belongs to the dihydroorotate dehydrogenase family. Type 1 subfamily. In terms of assembly, heterotetramer of 2 PyrK and 2 PyrD type B subunits. However, the metal reductase complex seems to be composed of a heterooctamer of 4 PyrK and 4 PyrD subunits. It depends on FMN as a cofactor.

Its subcellular location is the cytoplasm. It catalyses the reaction (S)-dihydroorotate + NAD(+) = orotate + NADH + H(+). Its pathway is pyrimidine metabolism; UMP biosynthesis via de novo pathway; orotate from (S)-dihydroorotate (NAD(+) route): step 1/1. Catalyzes the conversion of dihydroorotate to orotate with NAD(+) as electron acceptor. Its function is as follows. Together with PyrK, also forms a metal reductase complex able to reduce Fe(III)-chelates to Fe(II)-chelates, as well as soluble Cr(VI) and U(VI), using NADH as electron donor. To a lesser extent, can also use NADPH as an electron donor. Is unable to reduce riboflavin and FMN with NADH as electron donor. May have an in vivo role in metal reduction in D.reducens, which is an organism capable of reducing contaminant heavy metals and radionuclides. The polypeptide is Dihydroorotate dehydrogenase B (NAD(+)), catalytic subunit (pyrD) (Desulforamulus reducens (strain ATCC BAA-1160 / DSM 100696 / MI-1) (Desulfotomaculum reducens)).